Consider the following 167-residue polypeptide: Kininogen-1 (167 aa).

Positions 1–23 (MRLWFCLSFFIILCLEHFPGTLA) are cleaved as a signal peptide.

It belongs to the bradykinin-related peptide family. As to expression, expressed by the skin glands.

It localises to the secreted. Vasodilator. Bradykinin produces in vitro relaxation of rat arterial smooth muscle and constriction of intestinal smooth muscle. May target bradykinin receptors (BDKRB). In Bombina orientalis (Oriental fire-bellied toad), this protein is Kininogen-1.